Consider the following 192-residue polypeptide: Ubiquitin-conjugating enzyme E2 27 (192 aa).

Residues 2–150 form the UBC core domain; sequence IDFSRIQKEL…ARYWTETFAK (149 aa). Catalysis depends on cysteine 88, which acts as the Glycyl thioester intermediate. Residues 153–192 enclose the UBA domain; sequence SLEEKVKRLVEMGFGDAQVRSAIESSGGDENLALEKLCSA.

It belongs to the ubiquitin-conjugating enzyme family. In terms of tissue distribution, expressed in seeds, pistils, siliques, hypocotyls and leaves.

The enzyme catalyses S-ubiquitinyl-[E1 ubiquitin-activating enzyme]-L-cysteine + [E2 ubiquitin-conjugating enzyme]-L-cysteine = [E1 ubiquitin-activating enzyme]-L-cysteine + S-ubiquitinyl-[E2 ubiquitin-conjugating enzyme]-L-cysteine.. Its pathway is protein modification; protein ubiquitination. Functionally, accepts the ubiquitin from the E1 complex and catalyzes its covalent attachment to other proteins. The polypeptide is Ubiquitin-conjugating enzyme E2 27 (UBC27) (Arabidopsis thaliana (Mouse-ear cress)).